The following is a 257-amino-acid chain: Molybdate-binding protein ModA (257 aa).

An N-terminal signal peptide occupies residues 1–24 (MARKWLNLFAGAALSFAVAGNALA). Molybdate contacts are provided by S36, S63, A149, V176, and Y194.

It belongs to the bacterial solute-binding protein ModA family. The complex is composed of two ATP-binding proteins (ModC), two transmembrane proteins (ModB) and a solute-binding protein (ModA).

The protein localises to the periplasm. Part of the ABC transporter complex ModABC involved in the transport of molybdenum into the cell. Binds molybdate with high affinity in vitro and with a similar affinity in vivo. Binds tungstate with high affinity in vitro. Binds unnatural anion perrhenate with high affinity in vitro. Does not bind sulfate, phosphate, arsenate, selenate, chlorate, metavanadate, nitrate, perchlorate, permanganate or carbonate. The protein is Molybdate-binding protein ModA (modA) of Escherichia coli (strain K12).